An 82-amino-acid chain; its full sequence is Host transcription reprogramming factor 10 (82 aa).

Residues 1–19 (MQIFNMVSLVALFALGATA) form the signal peptide. Residues 57–81 (WVCHACNKQFTTPAALQKHKDTVVH) form a C2H2-type zinc finger.

It localises to the secreted. The protein localises to the host nucleus. Functionally, probable secreted effector that translocates into the nuclei of host cells to reprogram the expression of targeted genes by binding on effector binding elements in rice. This is Host transcription reprogramming factor 10 from Pyricularia oryzae (strain 70-15 / ATCC MYA-4617 / FGSC 8958) (Rice blast fungus).